We begin with the raw amino-acid sequence, 343 residues long: MITLSHITKQFTLGAQTITALSDVSLHVSAGQIYGVIGASGAGKSTLIRCVNLLERPTSGTVVVNSIDLTNLPERKLIDARRQIGMIFQHFNLLSSRTVAGNVALPLELDNLPKSAIARRVTELLALAGLEDKADSYPANLSGGQKQRVAIARALASNPKVLLCDEATSALDPATTHSILALLKDINQRLGLTILLITHEMDVVKRICDQVAVISQGELIEQDTVSEMFSHPKTPLAQAFIRSTLHLDIPQDYQQRMHRQRAPGRIPILQLEFTGLSVDAPLLSETARRFNVNNNIISAQMDYAGGVKFGIMLTEMDGDEADTASAIAYLQQHQVKVEVLGYV.

The region spanning 2 to 241 (ITLSHITKQF…PKTPLAQAFI (240 aa)) is the ABC transporter domain. 38–45 (GASGAGKS) serves as a coordination point for ATP.

Belongs to the ABC transporter superfamily. Methionine importer (TC 3.A.1.24) family. The complex is composed of two ATP-binding proteins (MetN), two transmembrane proteins (MetI) and a solute-binding protein (MetQ).

It localises to the cell inner membrane. The catalysed reaction is L-methionine(out) + ATP + H2O = L-methionine(in) + ADP + phosphate + H(+). It catalyses the reaction D-methionine(out) + ATP + H2O = D-methionine(in) + ADP + phosphate + H(+). In terms of biological role, part of the ABC transporter complex MetNIQ involved in methionine import. Responsible for energy coupling to the transport system. In Sodalis glossinidius (strain morsitans), this protein is Methionine import ATP-binding protein MetN.